A 120-amino-acid chain; its full sequence is NAD(P)H-quinone oxidoreductase subunit 3, chloroplastic (120 aa).

The next 3 membrane-spanning stretches (helical) occupy residues 9-29 (IFWAFLIISSVIPILAFFISG), 64-84 (MFALVFVVFDVETVFLYPWAM), and 88-108 (VLGVSVFIEALIFVLILIVGS).

This sequence belongs to the complex I subunit 3 family. In terms of assembly, NDH is composed of at least 16 different subunits, 5 of which are encoded in the nucleus.

It is found in the plastid. It localises to the chloroplast thylakoid membrane. It catalyses the reaction a plastoquinone + NADH + (n+1) H(+)(in) = a plastoquinol + NAD(+) + n H(+)(out). The catalysed reaction is a plastoquinone + NADPH + (n+1) H(+)(in) = a plastoquinol + NADP(+) + n H(+)(out). NDH shuttles electrons from NAD(P)H:plastoquinone, via FMN and iron-sulfur (Fe-S) centers, to quinones in the photosynthetic chain and possibly in a chloroplast respiratory chain. The immediate electron acceptor for the enzyme in this species is believed to be plastoquinone. Couples the redox reaction to proton translocation, and thus conserves the redox energy in a proton gradient. This chain is NAD(P)H-quinone oxidoreductase subunit 3, chloroplastic, found in Vitis vinifera (Grape).